The following is a 339-amino-acid chain: Fructose-1,6-bisphosphatase isozyme 2 (339 aa).

The interval 3 to 10 (DRSPFETD) is important for interaction with ALDOA. AMP is bound by residues Val18 and 28 to 32 (TGELT). Asp69 and Glu98 together coordinate Mg(2+). An AMP-binding site is contributed by 113–114 (KY). Mg(2+) contacts are provided by Asp119, Leu121, and Asp122. Asp122 provides a ligand contact to substrate. Arg141 contributes to the AMP binding site. Residues 204–208 (KKKGK) carry the Nuclear localization signal motif. A substrate-binding site is contributed by 213-216 (NEGY). Residues Tyr216 and Tyr219 each carry the phosphotyrosine modification. Residues 245-249 (YVGSM), Tyr265, and Lys275 each bind substrate. Glu281 contacts Mg(2+).

The protein belongs to the FBPase class 1 family. Homotetramer. Interacts with ALDOA; the interaction blocks inhibition by physiological concentrations of AMP and reduces inhibition by Ca(2+). Interacts with alpha-actinin and F-actin. Mg(2+) serves as cofactor.

It localises to the cell junction. The protein resides in the cytoplasm. Its subcellular location is the nucleus. It is found in the myofibril. The protein localises to the sarcomere. It localises to the z line. The enzyme catalyses beta-D-fructose 1,6-bisphosphate + H2O = beta-D-fructose 6-phosphate + phosphate. It participates in carbohydrate biosynthesis; gluconeogenesis. Subject to complex allosteric regulation. The enzyme can assume an active R-state, or an inactive T-state. Intermediate conformations may exist. AMP acts as an allosteric inhibitor. Fructose 2,6-bisphosphate acts as a competitive inhibitor. Strongly inhibited by Ca(2+). Catalyzes the hydrolysis of fructose 1,6-bisphosphate to fructose 6-phosphate in the presence of divalent cations and probably participates in glycogen synthesis from carbohydrate precursors, such as lactate. The polypeptide is Fructose-1,6-bisphosphatase isozyme 2 (Fbp2) (Rattus norvegicus (Rat)).